The sequence spans 316 residues: MKKAVILLNMGGPSSLLEVDMFLKNMFNDPRILPIKSPFFRSLVASFIANRRSETAKANYRKIGGKSPLIGHTFNLIQKLQSLDPSRFYTYAMRYTPPMTDMAVRELAQKEIEEVTLFSLYPQYSTTTTLSSIEEFHKQCALLSYFPKTKEIDRYFEDSNYNEAIIDRILEALGGDNPEEFTLIFSAHGLPQSVIDAGDPYEKEVHANIQALTKLLEERGITFKKITHAYQSKVGPMKWLEPSLDEVLKLHAKEKILLYPIAFTLDNSETDFELRIEYQEKATHLGITDYRVASCLNDSTRFAHAIIKLISQGEIS.

2 residues coordinate Fe cation: His-188 and Glu-269.

It belongs to the ferrochelatase family.

It localises to the cytoplasm. The enzyme catalyses heme b + 2 H(+) = protoporphyrin IX + Fe(2+). It participates in porphyrin-containing compound metabolism; protoheme biosynthesis; protoheme from protoporphyrin-IX: step 1/1. Its function is as follows. Catalyzes the ferrous insertion into protoporphyrin IX. The sequence is that of Ferrochelatase from Wolinella succinogenes (strain ATCC 29543 / DSM 1740 / CCUG 13145 / JCM 31913 / LMG 7466 / NCTC 11488 / FDC 602W) (Vibrio succinogenes).